Reading from the N-terminus, the 86-residue chain is Small ribosomal subunit protein uS17 (86 aa).

It belongs to the universal ribosomal protein uS17 family. As to quaternary structure, part of the 30S ribosomal subunit.

Functionally, one of the primary rRNA binding proteins, it binds specifically to the 5'-end of 16S ribosomal RNA. The chain is Small ribosomal subunit protein uS17 from Roseiflexus sp. (strain RS-1).